We begin with the raw amino-acid sequence, 518 residues long: E3 ubiquitin-protein ligase TRIM39 (518 aa).

The segment at 29–70 (CSVCLEYLKEPVIIECGHNFCKACITRWWEDLERDFPCPVCR) adopts an RING-type zinc-finger fold. A B box-type zinc finger spans residues 102 to 143 (RDESLCPQHHEALSLFCYEDQEAVCLICAISHTHRAHTVVPL). Residues Cys107, His110, Cys129, and His135 each coordinate Zn(2+). Residues 181 to 250 (ELKRLVESRR…AHLAAEVEGK (70 aa)) adopt a coiled-coil conformation. Interaction with CDKN1A stretches follow at residues 268 to 337 (KNIP…QLIA) and 389 to 518 (TSGR…TDWE). Residues 319–514 (SNFPRQYFAL…NAAPLTIRPP (196 aa)) form the B30.2/SPRY domain.

This sequence belongs to the TRIM/RBCC family. As to quaternary structure, interacts with MOAP1. Interacts with CDKN1A. Autoubiquitinated.

Its subcellular location is the cytoplasm. It is found in the cytosol. The protein resides in the mitochondrion. It localises to the nucleus. It catalyses the reaction S-ubiquitinyl-[E2 ubiquitin-conjugating enzyme]-L-cysteine + [acceptor protein]-L-lysine = [E2 ubiquitin-conjugating enzyme]-L-cysteine + N(6)-ubiquitinyl-[acceptor protein]-L-lysine.. It functions in the pathway protein modification; protein ubiquitination. E3 ubiquitin-protein ligase. May facilitate apoptosis by inhibiting APC/C-Cdh1-mediated poly-ubiquitination and subsequent proteasome-mediated degradation of the pro-apoptotic protein MOAP1. Regulates the G1/S transition of the cell cycle and DNA damage-induced G2 arrest by stabilizing CDKN1A/p21. Positively regulates CDKN1A/p21 stability by competing with DTL for CDKN1A/p21 binding, therefore disrupting DCX(DTL) E3 ubiquitin ligase complex-mediated CDKN1A/p21 ubiquitination and degradation. The chain is E3 ubiquitin-protein ligase TRIM39 (TRIM39) from Pan troglodytes (Chimpanzee).